Here is a 771-residue protein sequence, read N- to C-terminus: MIIDADYITEDGKPIIRIFKKEKGEFKVEYDRTFRPYIYALLKDDSAIDEVKKITAERHGKIVRITEVEKVQKKFLGRPIEVWKLYLEHPQDVPAIREKIREHPAVVDIFEYDIPFAKRYLIDKGLTPMEGNEELTFLAVDIETLYHEGEEFGKGPIIMISYADEEGAKVITWKSIDLPYVEVVSSEREMIKRLVKVIREKDPDVIITYNGDNFDFPYLLKRAEKLGIKLPLGRDNSEPKMQRMGDSLAVEIKGRIHFDLFPVIRRTINLPTYTLEAVYEAIFGKSKEKVYAHEIAEAWETGKGLERVAKYSMEDAKVTFELGKEFFPMEAQLARLVGQPVWDVSRSSTGNLVEWFLLRKAYERNELAPNKPDEREYERRLRESYEGGYVKEPEKGLWEGIVSLDFRSLYPSIIITHNVSPDTLNRENCKEYDVAPQVGHRFCKDFPGFIPSLLGNLLEERQKIKKRMKESKDPVEKKLLDYRQRAIKILANSYYGYYGYAKARWYCKECAESVTAWGRQYIDLVRRELESRGFKVLYIDTDGLYATIPGAKHEEIKEKALKFVEYINSKLPGLLELEYEGFYARGFFVTKKKYALIDEEGKIVTRGLEIVRRDWSEIAKETQAKVLEAILKHGNVDEAVKIVKEVTEKLSKYEIPPEKLVIYEQITRPLSEYKAIGPHVAVAKRLAAKGVKVKPGMVIGYIVLRGDGPISKRAIAIEEFDPKKHKYDAEYYIENQVLPAVERILRAFGYRKEDLKYQKTKQVGLGAWLKF.

The protein belongs to the DNA polymerase type-B family.

The enzyme catalyses DNA(n) + a 2'-deoxyribonucleoside 5'-triphosphate = DNA(n+1) + diphosphate. The protein is DNA polymerase 1 (polI) of Pyrococcus abyssi (strain GE5 / Orsay).